The primary structure comprises 131 residues: Acyl carrier protein 3, mitochondrial (131 aa).

Residues 1 to 39 (MHCIRSSILQHLRLRVSVRPTSLLQNENGFKSIGIFNFT) constitute a mitochondrion transit peptide. The 76-residue stretch at 49–124 (DQILSRVIEL…DVATYILSET (76 aa)) folds into the Carrier domain. Ser-84 is subject to O-(pantetheine 4'-phosphoryl)serine.

This sequence belongs to the acyl carrier protein (ACP) family. As to quaternary structure, complex I is composed of at least 49 different subunits. 4'-phosphopantetheine is transferred from CoA to a specific serine of the apo-ACP-like protein.

It is found in the mitochondrion. It functions in the pathway lipid metabolism; fatty acid biosynthesis. Carrier of the growing fatty acid chain in fatty acid biosynthesis. May be involved in the synthesis of short and medium chain fatty acids. Accessory and non-catalytic subunit of the mitochondrial membrane respiratory chain NADH dehydrogenase (Complex I), which functions in the transfer of electrons from NADH to the respiratory chain. This is Acyl carrier protein 3, mitochondrial (MTACP2) from Arabidopsis thaliana (Mouse-ear cress).